Consider the following 228-residue polypeptide: Woronin body membrane protein wscA (228 aa).

Transmembrane regions (helical) follow at residues 89 to 109 (MTLY…GILQ), 130 to 150 (LIVS…IAGA), 162 to 182 (AGFM…LAFA), and 185 to 205 (FLPE…IGTY).

Belongs to the peroxisomal membrane protein PXMP2/4 family. Self-assembles into detergent-resistant oligomers and forms a complex with hexA assemblies.

The protein localises to the peroxisome membrane. It localises to the cell septum. In terms of biological role, woronin sorting complex protein involved in both Woronin bodies (WB) formation and inherence. Localizes to large peroxisome membranes where it self-assembles into detergent-resistant oligomers that envelop hex-1 assemblies, producing asymmetrical nascent WBs. These structures are then delivered to the cell cortex, which permits partitioning of the nascent WB and WB inheritance. This chain is Woronin body membrane protein wscA, found in Aspergillus fumigatus (strain ATCC MYA-4609 / CBS 101355 / FGSC A1100 / Af293) (Neosartorya fumigata).